Here is a 303-residue protein sequence, read N- to C-terminus: Lipoyl synthase (303 aa).

[4Fe-4S] cluster contacts are provided by cysteine 35, cysteine 40, cysteine 46, cysteine 61, cysteine 65, cysteine 68, and serine 273. The Radical SAM core domain occupies 47 to 262; that stretch reads FRERQATFLI…KELAEKMGFR (216 aa).

The protein belongs to the radical SAM superfamily. Lipoyl synthase family. Requires [4Fe-4S] cluster as cofactor.

It is found in the cytoplasm. It carries out the reaction [[Fe-S] cluster scaffold protein carrying a second [4Fe-4S](2+) cluster] + N(6)-octanoyl-L-lysyl-[protein] + 2 oxidized [2Fe-2S]-[ferredoxin] + 2 S-adenosyl-L-methionine + 4 H(+) = [[Fe-S] cluster scaffold protein] + N(6)-[(R)-dihydrolipoyl]-L-lysyl-[protein] + 4 Fe(3+) + 2 hydrogen sulfide + 2 5'-deoxyadenosine + 2 L-methionine + 2 reduced [2Fe-2S]-[ferredoxin]. It participates in protein modification; protein lipoylation via endogenous pathway; protein N(6)-(lipoyl)lysine from octanoyl-[acyl-carrier-protein]: step 2/2. Catalyzes the radical-mediated insertion of two sulfur atoms into the C-6 and C-8 positions of the octanoyl moiety bound to the lipoyl domains of lipoate-dependent enzymes, thereby converting the octanoylated domains into lipoylated derivatives. This chain is Lipoyl synthase, found in Geobacter sulfurreducens (strain ATCC 51573 / DSM 12127 / PCA).